The chain runs to 359 residues: MTDETTEILVAGANPYPVVIGRGLRFDLARHLGSAVSKVLVVHPPTLGAAAAELRESLAGQYEVLLTEVPDAEAAKRIEVASFLWCIMGQADFTRSDAVVGLGGGAVTDLAGFAAATWLRGVRLVQAPTTLLGMVDAAVGGKTGINTAEGKNLVGAFYAPAAVVCDLDMLISLGRNELLAGFAEVVKYGFIAEPEILDIIERDVDAATDPESAEFRRVVELSIGIKARVVGEDFTEQGLREILNYGHTLGHAIEHAERYQWRHGAAIAVGMVFAAELGRLSGRLSDDAVERHRRILASLTLPTSYPLGRWQTLLAAMQRDKKARGSLLRFIVLDDVARPTVLAGPDQSLLFAAYQEIAS.

NAD(+) is bound by residues 71–76 (DAEAAK), 105–109 (GAVTD), 129–130 (TT), Lys-142, and Lys-151. Glu-184, His-247, and His-263 together coordinate Zn(2+).

It belongs to the sugar phosphate cyclases superfamily. Dehydroquinate synthase family. NAD(+) serves as cofactor. It depends on Co(2+) as a cofactor. The cofactor is Zn(2+).

The protein resides in the cytoplasm. The catalysed reaction is 7-phospho-2-dehydro-3-deoxy-D-arabino-heptonate = 3-dehydroquinate + phosphate. Its pathway is metabolic intermediate biosynthesis; chorismate biosynthesis; chorismate from D-erythrose 4-phosphate and phosphoenolpyruvate: step 2/7. Its function is as follows. Catalyzes the conversion of 3-deoxy-D-arabino-heptulosonate 7-phosphate (DAHP) to dehydroquinate (DHQ). This chain is 3-dehydroquinate synthase, found in Leifsonia xyli subsp. xyli (strain CTCB07).